Here is a 517-residue protein sequence, read N- to C-terminus: Crotonobetaine/carnitine--CoA ligase (517 aa).

It belongs to the ATP-dependent AMP-binding enzyme family.

The catalysed reaction is 4-(trimethylamino)butanoate + ATP + CoA = 4-(trimethylamino)butanoyl-CoA + AMP + diphosphate. It catalyses the reaction crotonobetaine + ATP + CoA = crotonobetainyl-CoA + AMP + diphosphate. It carries out the reaction (R)-carnitine + ATP + CoA = (R)-carnitinyl-CoA + AMP + diphosphate. The protein operates within amine and polyamine metabolism; carnitine metabolism. Functionally, catalyzes the transfer of CoA to carnitine, generating the initial carnitinyl-CoA needed for the CaiB reaction cycle. Also has activity toward crotonobetaine and gamma-butyrobetaine. This is Crotonobetaine/carnitine--CoA ligase from Salmonella paratyphi B (strain ATCC BAA-1250 / SPB7).